The sequence spans 541 residues: Chaperonin GroEL 2 (541 aa).

ATP is bound by residues 30–33 (TLGP), Lys51, 87–91 (DGTTT), Gly415, and Asp496.

This sequence belongs to the chaperonin (HSP60) family. Forms a cylinder of 14 subunits composed of two heptameric rings stacked back-to-back. Interacts with the co-chaperonin GroES.

The protein localises to the cytoplasm. The enzyme catalyses ATP + H2O + a folded polypeptide = ADP + phosphate + an unfolded polypeptide.. Together with its co-chaperonin GroES, plays an essential role in assisting protein folding. The GroEL-GroES system forms a nano-cage that allows encapsulation of the non-native substrate proteins and provides a physical environment optimized to promote and accelerate protein folding. This Gluconacetobacter diazotrophicus (strain ATCC 49037 / DSM 5601 / CCUG 37298 / CIP 103539 / LMG 7603 / PAl5) protein is Chaperonin GroEL 2.